The chain runs to 436 residues: GTPase Der (436 aa).

EngA-type G domains lie at 4-167 (PVVA…KNIP) and 176-351 (VQFC…ENHS). GTP contacts are provided by residues 10–17 (GRPNVGKS), 57–61 (DTGGI), 119–122 (NKVD), 182–189 (GRPNVGKS), 229–233 (DTAGM), and 294–297 (NKWD). Residues 352–436 (MRVQTNILND…PIRIFARARK (85 aa)) form the KH-like domain.

Belongs to the TRAFAC class TrmE-Era-EngA-EngB-Septin-like GTPase superfamily. EngA (Der) GTPase family. As to quaternary structure, associates with the 50S ribosomal subunit.

Functionally, GTPase that plays an essential role in the late steps of ribosome biogenesis. The sequence is that of GTPase Der from Bacillus licheniformis (strain ATCC 14580 / DSM 13 / JCM 2505 / CCUG 7422 / NBRC 12200 / NCIMB 9375 / NCTC 10341 / NRRL NRS-1264 / Gibson 46).